Reading from the N-terminus, the 714-residue chain is Mitochondrial division protein 1 (714 aa).

Positions 240–298 form a coiled coil; that stretch reads LNIQKNSTLSEIRDIEVEVENLRQKKEKLLGKIANIEQNQLLLEDNLKQIDDRLDFLEE. A disordered region spans residues 323–354; that stretch reads LKNDAIRNEGVTTESISSEASNLPPRRRQQLR. Residues 332 to 343 show a composition bias toward polar residues; the sequence is GVTTESISSEAS. At Ser376 the chain carries Phosphoserine. WD repeat units follow at residues 396-436, 439-478, 500-539, 561-603, 604-642, 644-681, and 685-714; these read THDD…KIGE, GHLATINCMQINRDYGTLVTGGRDAALKLWNLNLAQQLYQ, AHTDEVTALSLDPSFLVSGSQDRTIRQWDLRSGKCLQTID, TQRN…RTLK, GHTDAITSLKFDSACLVTGSYDRTVRIWDLRTGLLNKFH, YSAPVLSLDLFQENAAVVVADEPSVQIYDSEKDESWSC, and GNETSVSTVKYKENYMVEGRENGDVNIWAV.

This sequence belongs to the WD repeat MDV1/CAF4 family. As to quaternary structure, interacts with CAF4, DNM1 and FIS1, components of the mitochondrial fission machinery. Interacts via its N-terminal, coiled-coil extension (NTE) with FIS1, and via its WD repeats with DNM1.

The protein resides in the mitochondrion outer membrane. Functionally, involved in mitochondrial fission. Has a partially redundant function to CAF4 in acting as an adapter protein, binding to FIS1 on the mitochondrial outer membrane and recruiting the dynamin-like GTPase DNM1 to form mitochondrial fission complexes. Formation of these complexes is required to promote constriction and fission of the mitochondrial compartment at a late step in mitochondrial division. This Saccharomyces cerevisiae (strain YJM789) (Baker's yeast) protein is Mitochondrial division protein 1 (MDV1).